Consider the following 185-residue polypeptide: uncharacterized protein (185 aa).

The 139-residue stretch at 39–177 folds into the Nudix hydrolase domain; sequence LWHASAGVLV…SWPFVPDSRA (139 aa). A Nudix box motif is present at residues 77 to 99; the sequence is GGVVDPGETPQETAIREVGEELG. Glu93 and Glu97 together coordinate Mg(2+).

It belongs to the Nudix hydrolase family. Requires Mg(2+) as cofactor.

This is an uncharacterized protein from Rhodococcus erythropolis (Arthrobacter picolinophilus).